The sequence spans 95 residues: Ragulator complex protein LAMTOR4 homolog (95 aa).

It belongs to the LAMTOR4 family. As to quaternary structure, part of the Ragulator complex.

It is found in the lysosome. Its function is as follows. Regulator of the TOR pathway, a signaling cascade that promotes cell growth in response to growth factors, energy levels, and amino acids. As part of the Ragulator complex, may activate the TOR signaling cascade in response to amino acids. The chain is Ragulator complex protein LAMTOR4 homolog from Nematostella vectensis (Starlet sea anemone).